Reading from the N-terminus, the 194-residue chain is Recombination protein RecR (194 aa).

Residues cysteine 55 to cysteine 70 form a C4-type zinc finger. Residues serine 78–proline 171 enclose the Toprim domain.

The protein belongs to the RecR family.

May play a role in DNA repair. It seems to be involved in an RecBC-independent recombinational process of DNA repair. It may act with RecF and RecO. This Thermus thermophilus (strain ATCC 27634 / DSM 579 / HB8) protein is Recombination protein RecR.